Reading from the N-terminus, the 201-residue chain is tRNA (guanine-N(7)-)-methyltransferase (201 aa).

Residues Glu33, Glu58, Asp85, and Asp106 each contribute to the S-adenosyl-L-methionine site. Residue Asp106 is part of the active site. Residues Lys110, Asp142, and 180-183 each bind substrate; that span reads TTYE.

Belongs to the class I-like SAM-binding methyltransferase superfamily. TrmB family.

The catalysed reaction is guanosine(46) in tRNA + S-adenosyl-L-methionine = N(7)-methylguanosine(46) in tRNA + S-adenosyl-L-homocysteine. It functions in the pathway tRNA modification; N(7)-methylguanine-tRNA biosynthesis. In terms of biological role, catalyzes the formation of N(7)-methylguanine at position 46 (m7G46) in tRNA. The protein is tRNA (guanine-N(7)-)-methyltransferase of Mesomycoplasma hyopneumoniae (strain 232) (Mycoplasma hyopneumoniae).